We begin with the raw amino-acid sequence, 101 residues long: Small ribosomal subunit protein uS14 (101 aa).

It belongs to the universal ribosomal protein uS14 family. In terms of assembly, part of the 30S ribosomal subunit. Contacts proteins S3 and S10.

In terms of biological role, binds 16S rRNA, required for the assembly of 30S particles and may also be responsible for determining the conformation of the 16S rRNA at the A site. In Pseudomonas putida (strain W619), this protein is Small ribosomal subunit protein uS14.